The chain runs to 648 residues: RalA-binding protein 1 (648 aa).

The tract at residues 1–158 (MTECFLPPSS…KKSKDLTAAD (158 aa)) is disordered. N-acetylthreonine is present on threonine 2. Over residues 24–33 (LTRTPSSEEI) the composition is skewed to polar residues. Phosphoserine is present on residues serine 29, serine 30, and serine 34. At threonine 44 the chain carries Phosphothreonine. Residues serine 48 and serine 62 each carry the phosphoserine modification. Over residues 52–68 (DVLHEPPDTVSDDDKDH) the composition is skewed to basic and acidic residues. 69 to 74 (GKKKGK) contacts ATP. The span at 69 to 79 (GKKKGKFKKKE) shows a compositional bias: basic residues. Serine 92 and serine 93 each carry phosphoserine. The span at 102 to 118 (KVKRSKGIHVFKKPSFS) shows a compositional bias: basic residues. The tract at residues 102-119 (KVKRSKGIHVFKKPSFSK) is nuclear localization signal. Residues 119–155 (KKKEKDFKIKEKPKEEKHKEEKHKEEKHKEKKSKDLT) show a composition bias toward basic and acidic residues. Residues 154–219 (LTAADVVKQW…PAVFRECVDY (66 aa)) are mediates association with membranes and could form transmembrane domains. The region spanning 192 to 380 (VPLVDAVERT…VVLKQVTRPL (189 aa)) is the Rho-GAP domain. The tract at residues 403 to 499 (RRQEFLLNCL…LTEQEELLAM (97 aa)) is mediates interaction with RALA and RALB. 418–425 (GGIKDLSK) lines the ATP pocket. Serine 461 and serine 463 each carry phosphoserine. Residues 500–648 (EQFLRRQIAS…PSKDRKETPI (149 aa)) are mediates interaction with REPS1 and REPS2. 2 disordered regions span residues 525-552 (QSRQ…EEEL) and 598-648 (RAKS…ETPI). Over residues 536-552 (EEYSSDSESESEDEEEL) the composition is skewed to acidic residues. Over residues 629 to 648 (RVAKEQAKASPSKDRKETPI) the composition is skewed to basic and acidic residues. A Phosphoserine modification is found at serine 638.

As to quaternary structure, interacts with the GTP-bound form of RALA (via effector domain); during mitosis, recruits RALBP1 to the mitochondrion where it promotes DNM1L phosphorylation and mitochondrial fission. Interacts with DNM1L; mediates its mitotic kinase cyclin B-CDK1-mediated phosphorylation during mitosis to promote mitochondrial fission. Interacts with the mitotic kinase cyclin B-CDK1 during mitosis. Interacts with the GTP-bound form of RALB (via effector domain). Interacts with REPS1; the interaction is direct and does not affect RALA-binding nor GTPase activator activity of RALBP1. Interacts with REPS2; the interaction is direct and does not affect RALA-binding nor GTPase activator activity of RALBP1. Interacts with EPN1, NUMB and TFAP2A during interphase and mitosis. Interacts with AP2M1; as part of the AP2 complex. Interacts with CDC42. Interacts with RAC1. Post-translationally, tyrosine-phosphorylated upon stimulation of cells with EGF. May undergo proteolytic cleavage to give peptides which reassemble to form a transporter complex. As to expression, ubiquitous. The highest level of expression was observed in ovaries and skeletal muscle, whereas the lowest was found in spleen, liver and peripheral blood leukocytes.

It is found in the cell membrane. Its subcellular location is the cytoplasm. The protein localises to the cytosol. The protein resides in the cytoskeleton. It localises to the spindle pole. It is found in the nucleus. Its subcellular location is the mitochondrion. The catalysed reaction is an S-substituted glutathione(in) + ATP + H2O = an S-substituted glutathione(out) + ADP + phosphate + H(+). It carries out the reaction ATP + H2O + xenobioticSide 1 = ADP + phosphate + xenobioticSide 2.. It catalyses the reaction leukotriene C4(in) + ATP + H2O = leukotriene C4(out) + ADP + phosphate + H(+). In terms of biological role, multifunctional protein that functions as a downstream effector of RALA and RALB. As a GTPase-activating protein/GAP can inactivate CDC42 and RAC1 by stimulating their GTPase activity. As part of the Ral signaling pathway, may also regulate ligand-dependent EGF and insulin receptors-mediated endocytosis. During mitosis, may act as a scaffold protein in the phosphorylation of EPSIN/EPN1 by the mitotic kinase cyclin B-CDK1, preventing endocytosis during that phase of the cell cycle. During mitosis, also controls mitochondrial fission as an effector of RALA. Recruited to mitochondrion by RALA, acts as a scaffold to foster the mitotic kinase cyclin B-CDK1-mediated phosphorylation and activation of DNM1L. Could also function as a primary ATP-dependent active transporter for glutathione conjugates of electrophiles. May also actively catalyze the efflux of a wide range of substrates including xenobiotics like doxorubicin (DOX) contributing to cell multidrug resistance. The chain is RalA-binding protein 1 from Mus musculus (Mouse).